The sequence spans 37 residues: Large ribosomal subunit protein bL36 (37 aa).

The protein belongs to the bacterial ribosomal protein bL36 family.

The sequence is that of Large ribosomal subunit protein bL36 from Mycobacteroides abscessus (strain ATCC 19977 / DSM 44196 / CCUG 20993 / CIP 104536 / JCM 13569 / NCTC 13031 / TMC 1543 / L948) (Mycobacterium abscessus).